We begin with the raw amino-acid sequence, 456 residues long: G-protein coupled receptor 39 (456 aa).

Residues 1–34 (MASSSGSNHICSRVIDHSHVPEFEVATWIKITLI) are Extracellular-facing. Disulfide bonds link cysteine 11/cysteine 191 and cysteine 108/cysteine 210. Zn(2+)-binding residues include histidine 17 and histidine 19. A helical membrane pass occupies residues 35–55 (LVYLIIFVVGILGNSVTIRVT). Residues 56–69 (QVLQKKGYLQKEVT) are Cytoplasmic-facing. The helical transmembrane segment at 70–89 (DHMVSLACSDILVFLIGMPM) threads the bilayer. The Extracellular segment spans residues 90–109 (EFYSIIWNPLTTPSYALSCK). The chain crosses the membrane as a helical span at residues 110-131 (LHTFLFETCSYATLLHVLTLSF). Residues 132 to 151 (ERYIAICHPFKYKAVSGPRQ) lie on the Cytoplasmic side of the membrane. Residues 152–172 (VKLLIGFVWVTSALVALPLLF) form a helical membrane-spanning segment. At 173–217 (AMGIEYPLVNVPTHKGLNCNLSRTRHHDEPGNSNMSICTNLSNRW) the chain is on the extracellular side. N-linked (GlcNAc...) asparagine glycans are attached at residues asparagine 192 and asparagine 206. The helical transmembrane segment at 218-242 (EVFQSSIFGAFAVYLVVLASVAFMC) threads the bilayer. Residues 243 to 283 (WNMMKVLMKSKQGTLAGTGPQLQLRKSESEESRTARRQTII) are Cytoplasmic-facing. Residues 284–305 (FLRLIVVTLAVCWMPNQIRRIM) traverse the membrane as a helical segment. The Extracellular segment spans residues 306–323 (AAAKPKHDWTRTYFRAYM). The helical transmembrane segment at 324–344 (ILLPFSDTFFYLSSVVNPLLY) threads the bilayer. Topologically, residues 345–456 (NVSSQQFRKV…TENSLQEQEV (112 aa)) are cytoplasmic. Serine 397 carries the phosphoserine modification. Residues 415-456 (FQTEAKPGEAKPQPLSPESPQTGSETKPAGSTTENSLQEQEV) are disordered. The span at 430 to 456 (SPESPQTGSETKPAGSTTENSLQEQEV) shows a compositional bias: polar residues.

This sequence belongs to the G-protein coupled receptor 1 family. Interacts with HTR1A. Interacts with GALR1. As to expression, expression is detected in septumamygdala, parietal cells, enterocytes, neurons and pancreas, in peripheral organs such as the duodenum and kidney but not in the pituitary and hypothalamus.

Its subcellular location is the cell membrane. In terms of biological role, zinc-sensing receptor that can sense changes in extracellular Zn(2+), mediate Zn(2+) signal transmission, and participates in the regulation of numerous physiological processes including glucose homeostasis regulation, gastrointestinal mobility, hormone secretion and cell death. Activation by Zn(2+) in keratinocytes increases the intracellular concentration of Ca(2+) and activates the ERK/MAPK and PI3K/AKT signaling pathways leading to epithelial repair. Plays an essential role in normal wound healing by inducing the production of cytokines including the major inflammatory cytokine IL6 via the PKC/MAPK/CEBPB pathway. Regulates adipose tissue metabolism, especially lipolysis, and regulates the function of lipases, such as hormone-sensitive lipase and adipose triglyceride lipase. Plays a role in the inhibition of cell death and protects against oxidative, endoplasmic reticulum and mitochondrial stress by inducing secretion of the cytoprotective pigment epithelium-derived growth factor (PEDF) and probably other protective transcripts in a GNA13/RHOA/SRE-dependent manner. Forms dynamic heteroreceptor complexes with HTR1A and GALR1 depending on cell type or specific physiological states, resulting in signaling diversity: HTR1A-GPR39 shows additive increase in signaling along the serum response element (SRE) and NF-kappa-B pathways while GALR1 acts as an antagonist blocking SRE. The chain is G-protein coupled receptor 39 (Gpr39) from Mus musculus (Mouse).